A 616-amino-acid polypeptide reads, in one-letter code: Adenylosuccinate synthetase 1 (616 aa).

The disordered stretch occupies residues 1 to 27 (MDKQAERGQSAGPVKTPQGTQPPAHNY). A compositionally biased stretch (polar residues) spans 17–27 (PQGTQPPAHNY). GTP contacts are provided by residues 87–93 (GDEGKGK) and 117–119 (GHT). D88 serves as the catalytic Proton acceptor. Residues D88 and G117 each coordinate Mg(2+). IMP contacts are provided by residues 88–91 (DEGK), 115–118 (NAGH), T202, K216, Q328, T343, and K472. The active-site Proton donor is the H118. Position 468-474 (468-474 (AVTKKPR)) interacts with substrate. GTP is bound by residues R474 and 603–605 (GNG).

It belongs to the adenylosuccinate synthetase family. In terms of assembly, homodimer. Mg(2+) is required as a cofactor.

The protein localises to the cytoplasm. The enzyme catalyses IMP + L-aspartate + GTP = N(6)-(1,2-dicarboxyethyl)-AMP + GDP + phosphate + 2 H(+). It functions in the pathway purine metabolism; AMP biosynthesis via de novo pathway; AMP from IMP: step 1/2. Plays an important role in the salvage pathway for purine nucleotide biosynthesis. Catalyzes the first committed step in the biosynthesis of AMP from IMP. The chain is Adenylosuccinate synthetase 1 from Trypanosoma cruzi (strain CL Brener).